We begin with the raw amino-acid sequence, 549 residues long: Cation/acetate symporter ActP (549 aa).

The next 13 helical transmembrane spans lie at 33–53, 77–97, 103–123, 148–168, 183–203, 206–226, 262–282, 303–323, 355–375, 404–424, 428–448, 464–484, and 493–513; these read WQAI…TYWA, LAIA…ALVF, GLIY…LIAE, ILSA…QMVG, IAVV…GMLA, WVQI…AFMV, ISAL…PHIL, GFMG…IMLV, LFLG…VAGL, VSKI…VLFE, IAFM…PIIL, GGWL…TIWV, and IFPY…GIWF.

This sequence belongs to the sodium:solute symporter (SSF) (TC 2.A.21) family.

It localises to the cell inner membrane. In terms of biological role, transports acetate. This chain is Cation/acetate symporter ActP, found in Salmonella agona (strain SL483).